A 492-amino-acid polypeptide reads, in one-letter code: MTAPANVRVRFCPSPTGTPHVGMVRTALFNWAYARHTGGTFVFRIEDTDAARDSEESYLALLDALRWLGLDWDEGPEVGGPYGPYRQSQRGEIYRDVVAKLVEAGEAYYAFSTPEEVEARHIAAGRNPKLGYDNFDRHLTDSQRAAFLAEGRQPVVRLRMPDEDLGWDDLVRGSTVFAAGSVPDFALTRANGDPLYTLVNPCDDALMKITHVLRGEDLLPSTPRQLALYQALIRIGVAERIPQFAHLPTVLGEGTKKLSKRDPQSNLFAHRDRGFIPEGLLNYLALLGWAIADDRDVFSLDEMVAAFDVVDVNSNPARFDQKKADALNAEHIRMLTAADFAARLRHYLDVHGHRLALDDAAFATAAELVQTRIVVLGDAWDLLKFLNDDEYAIDPKAAAKELGPDGAAVLDAALPALDAVTDWAAPQIEAALKTALIDGLGLKPRKAFGPIRVGATGTTISPPLFESLQLLGRDRSLRRLRAARERAGQHSA.

The 'HIGH' region motif lies at 13–23 (PSPTGTPHVGM). The 'KMSKS' region signature appears at 257–261 (KLSKR). An ATP-binding site is contributed by K260.

It belongs to the class-I aminoacyl-tRNA synthetase family. Glutamate--tRNA ligase type 1 subfamily. Monomer.

It is found in the cytoplasm. It catalyses the reaction tRNA(Glu) + L-glutamate + ATP = L-glutamyl-tRNA(Glu) + AMP + diphosphate. Functionally, catalyzes the attachment of glutamate to tRNA(Glu) in a two-step reaction: glutamate is first activated by ATP to form Glu-AMP and then transferred to the acceptor end of tRNA(Glu). In Mycolicibacterium paratuberculosis (strain ATCC BAA-968 / K-10) (Mycobacterium paratuberculosis), this protein is Glutamate--tRNA ligase.